The chain runs to 308 residues: Acyl transferase (308 aa).

Residues serine 116, aspartate 213, and histidine 243 each act as charge relay system in the active site.

Belongs to the LuxD family.

Its pathway is lipid metabolism; fatty acid reduction for biolumincescence. In terms of biological role, acyl transferase is part of the fatty acid reductase system required for aldehyde biosynthesis; it produces fatty acids for the luminescent reaction. This is Acyl transferase from Shewanella hanedai (Alteromonas hanedai).